Consider the following 606-residue polypeptide: tRNA 5-methylaminomethyl-2-thiouridine biosynthesis bifunctional protein MnmC (606 aa).

A tRNA (mnm(5)s(2)U34)-methyltransferase region spans residues 1-237 (MNSNSSVQFN…KRDMLCGHYL (237 aa)). The interval 254 to 606 (IGGGISAACS…RRISVSRFKG (353 aa)) is FAD-dependent cmnm(5)s(2)U34 oxidoreductase.

This sequence in the N-terminal section; belongs to the methyltransferase superfamily. tRNA (mnm(5)s(2)U34)-methyltransferase family. In the C-terminal section; belongs to the DAO family. FAD serves as cofactor.

The protein localises to the cytoplasm. The catalysed reaction is 5-aminomethyl-2-thiouridine(34) in tRNA + S-adenosyl-L-methionine = 5-methylaminomethyl-2-thiouridine(34) in tRNA + S-adenosyl-L-homocysteine + H(+). Catalyzes the last two steps in the biosynthesis of 5-methylaminomethyl-2-thiouridine (mnm(5)s(2)U) at the wobble position (U34) in tRNA. Catalyzes the FAD-dependent demodification of cmnm(5)s(2)U34 to nm(5)s(2)U34, followed by the transfer of a methyl group from S-adenosyl-L-methionine to nm(5)s(2)U34, to form mnm(5)s(2)U34. The sequence is that of tRNA 5-methylaminomethyl-2-thiouridine biosynthesis bifunctional protein MnmC from Idiomarina loihiensis (strain ATCC BAA-735 / DSM 15497 / L2-TR).